Reading from the N-terminus, the 126-residue chain is Large ribosomal subunit protein bL12 (126 aa).

This sequence belongs to the bacterial ribosomal protein bL12 family. Homodimer. Part of the ribosomal stalk of the 50S ribosomal subunit. Forms a multimeric L10(L12)X complex, where L10 forms an elongated spine to which 2 to 4 L12 dimers bind in a sequential fashion. Binds GTP-bound translation factors.

Forms part of the ribosomal stalk which helps the ribosome interact with GTP-bound translation factors. Is thus essential for accurate translation. This chain is Large ribosomal subunit protein bL12, found in Acidovorax ebreus (strain TPSY) (Diaphorobacter sp. (strain TPSY)).